A 1906-amino-acid chain; its full sequence is DENN domain-containing protein 4C (1906 aa).

The region spanning 40–199 is the MABP domain; that stretch reads KAPITDIAVI…NVFLCYKKSV (160 aa). Positions 191-363 constitute a uDENN domain; the sequence is VFLCYKKSVP…NIPFPSPQRP (173 aa). Positions 384–520 constitute a cDENN domain; sequence PLPLSGANFS…PCKSLLGTLR (137 aa). Positions 522-640 constitute a dDENN domain; the sequence is LYQQLCSVHR…CSFVSDKDTG (119 aa). A phosphoserine mark is found at Ser-702, Ser-736, and Ser-740. Residues 818-852 form a PPR repeat; the sequence is DEVCYRVVMQLCGLWVNPVLAVRVLFEMKTARIKP. Residues 904–917 are compositionally biased toward polar residues; that stretch reads SQVFSISGGQSDQG. Disordered stretches follow at residues 904-942 and 963-984; these read SQVF…PPEL and LQPT…SIVK. The segment covering 920 to 939 has biased composition (basic and acidic residues); the sequence is SKDELVKEGADGHAPEEHTP. Thr-966 carries the post-translational modification Phosphothreonine. The span at 966–975 shows a compositional bias: pro residues; the sequence is TPEPQSPTEP. Ser-971 is subject to Phosphoserine. Thr-973 carries the post-translational modification Phosphothreonine. Residues Ser-987, Ser-1000, Ser-1043, Ser-1058, Ser-1096, and Ser-1123 each carry the phosphoserine modification. Polar residues predominate over residues 1154–1171; the sequence is NSLQSNSHSDQSRDTQAG. The disordered stretch occupies residues 1154-1184; the sequence is NSLQSNSHSDQSRDTQAGAQDPVNKRSSSYA. A phosphoserine mark is found at Ser-1181, Ser-1221, Ser-1240, Ser-1248, and Ser-1274. A disordered region spans residues 1246–1317; sequence SCSMELHGEG…PQSPYRAYKD (72 aa). The segment covering 1281–1291 has biased composition (basic and acidic residues); sequence PPARDSTETEK. The segment covering 1292–1302 has biased composition (polar residues); it reads SSPAVSSSKTL. Phosphoserine is present on residues Ser-1321, Ser-1333, and Ser-1342. Disordered stretches follow at residues 1410–1440, 1548–1577, and 1596–1628; these read SPNT…GDVG, STSG…SAEP, and ASYT…LSKR. The span at 1423-1437 shows a compositional bias: low complexity; the sequence is LTQSNTSLGSSSSSG. 2 stretches are compositionally biased toward polar residues: residues 1548–1564 and 1611–1628; these read STSG…SASE and GDVQ…LSKR. A phosphoserine mark is found at Ser-1620, Ser-1624, Ser-1626, Ser-1637, and Ser-1796.

Phosphorylated in response to insulin.

It localises to the cytoplasmic vesicle membrane. Its subcellular location is the cell membrane. The protein localises to the cytoplasm. It is found in the cytosol. Functionally, guanine nucleotide exchange factor (GEF) activating RAB10. Promotes the exchange of GDP to GTP, converting inactive GDP-bound RAB10 into its active GTP-bound form. Thereby, stimulates SLC2A4/GLUT4 glucose transporter-enriched vesicles delivery to the plasma membrane in response to insulin. This is DENN domain-containing protein 4C (Dennd4c) from Mus musculus (Mouse).